Reading from the N-terminus, the 205-residue chain is Inactive ribonuclease-like protein 9 (205 aa).

Positions 1 to 24 (MMLITTHSLLLLLLLLQLLQPLQF) are cleaved as a signal peptide. Cystine bridges form between Cys-97/Cys-152, Cys-115/Cys-167, and Cys-122/Cys-129. 2 N-linked (GlcNAc...) asparagine glycosylation sites follow: Asn-130 and Asn-142.

The protein belongs to the pancreatic ribonuclease family.

Its subcellular location is the secreted. Does not exhibit any ribonuclease activity. This Cebus capucinus (White-faced sapajou) protein is Inactive ribonuclease-like protein 9 (RNASE9).